The sequence spans 200 residues: NAD(P)H-quinone oxidoreductase subunit 6, chloroplastic (200 aa).

The next 5 helical transmembrane spans lie at 13 to 33 (IIFF…VLLS), 35 to 55 (IVYS…LYFA), 64 to 84 (AQIL…VMLI), 102 to 122 (ITLA…LNTS), and 156 to 176 (LLPF…AIVI).

Belongs to the complex I subunit 6 family. In terms of assembly, NDH is composed of at least 16 different subunits, 5 of which are encoded in the nucleus.

It is found in the plastid. It localises to the chloroplast thylakoid membrane. It catalyses the reaction a plastoquinone + NADH + (n+1) H(+)(in) = a plastoquinol + NAD(+) + n H(+)(out). The enzyme catalyses a plastoquinone + NADPH + (n+1) H(+)(in) = a plastoquinol + NADP(+) + n H(+)(out). NDH shuttles electrons from NAD(P)H:plastoquinone, via FMN and iron-sulfur (Fe-S) centers, to quinones in the photosynthetic chain and possibly in a chloroplast respiratory chain. The immediate electron acceptor for the enzyme in this species is believed to be plastoquinone. Couples the redox reaction to proton translocation, and thus conserves the redox energy in a proton gradient. The chain is NAD(P)H-quinone oxidoreductase subunit 6, chloroplastic (ndhG) from Physcomitrium patens (Spreading-leaved earth moss).